The chain runs to 369 residues: Phospho-N-acetylmuramoyl-pentapeptide-transferase (369 aa).

Helical transmembrane passes span 2-22 (IALL…TPLF), 55-75 (TVVV…MFLM), 86-106 (ALIL…DDFI), 120-140 (AKLI…LNFP), 163-183 (LAFG…NLIV), 196-216 (LDGL…LMGI), 239-259 (PLDL…FLWW), 266-286 (IFMG…FAIL), 291-311 (LLLG…IIQV), and 348-368 (ILGG…WVVL).

The protein belongs to the glycosyltransferase 4 family. MraY subfamily. Mg(2+) serves as cofactor.

It localises to the cell membrane. The catalysed reaction is UDP-N-acetyl-alpha-D-muramoyl-L-alanyl-gamma-D-glutamyl-meso-2,6-diaminopimeloyl-D-alanyl-D-alanine + di-trans,octa-cis-undecaprenyl phosphate = di-trans,octa-cis-undecaprenyl diphospho-N-acetyl-alpha-D-muramoyl-L-alanyl-D-glutamyl-meso-2,6-diaminopimeloyl-D-alanyl-D-alanine + UMP. It functions in the pathway cell wall biogenesis; peptidoglycan biosynthesis. Catalyzes the initial step of the lipid cycle reactions in the biosynthesis of the cell wall peptidoglycan: transfers peptidoglycan precursor phospho-MurNAc-pentapeptide from UDP-MurNAc-pentapeptide onto the lipid carrier undecaprenyl phosphate, yielding undecaprenyl-pyrophosphoryl-MurNAc-pentapeptide, known as lipid I. The chain is Phospho-N-acetylmuramoyl-pentapeptide-transferase from Pseudarthrobacter chlorophenolicus (strain ATCC 700700 / DSM 12829 / CIP 107037 / JCM 12360 / KCTC 9906 / NCIMB 13794 / A6) (Arthrobacter chlorophenolicus).